Here is a 345-residue protein sequence, read N- to C-terminus: MAPLLNTGLVILPLIVSTLLGPMPAFAQNETCATKGKPAGKVLQGYWENWDGAKNGVHPPFGWTPIQDAQIRQHGYNVISAAFPVILPNGTALWEDGMDANVKVATPAEMCQAKAAGATIVMSIGGATAAIDLSSSSVADKFVSTIVPILKRYNFDGVDIDIEAGLSGSGTIGTLSTSQANLVRIIDGILAQMPSNFGLTMAPETAYVTGGSVTYGAIWGAYLPIIKKYADNGRLWWLNMQYYNGDMYGCSGDSYKAGTVEGFVAQTDCLNKGLVIQGTTIRVPYDKQVPGLPAQSGAGGGYMSPSLVGQAWDHYNGSLKGLMTWSINWDGSKGWTFGDNVKGRL.

An N-terminal signal peptide occupies residues 1–27 (MAPLLNTGLVILPLIVSTLLGPMPAFA). N-linked (GlcNAc...) asparagine glycans are attached at residues asparagine 29 and asparagine 89. The region spanning 41–345 (KVLQGYWENW…TFGDNVKGRL (305 aa)) is the GH18 domain. The Proton donor role is filled by glutamate 163. Asparagine 316 carries an N-linked (GlcNAc...) asparagine glycan.

Belongs to the glycosyl hydrolase 18 family. Chitinase class V subfamily.

It localises to the secreted. It carries out the reaction Random endo-hydrolysis of N-acetyl-beta-D-glucosaminide (1-&gt;4)-beta-linkages in chitin and chitodextrins.. Functionally, secreted chitinase involved in the degradation of chitin, a component of the cell walls of fungi and exoskeletal elements of some animals (including worms and arthropods). Participates in the infection process and directly acts in the penetration process of the host cuticle. This chain is Endochitinase 4 (chi4), found in Metarhizium robertsii (strain ARSEF 23 / ATCC MYA-3075) (Metarhizium anisopliae (strain ARSEF 23)).